The sequence spans 211 residues: Interleukin-6 (211 aa).

Residues 1-25 (MNSLSTSTFSPVAFSLGLLLVMATA) form the signal peptide. A disulfide bridge links Cys-71 with Cys-77. At Ser-80 the chain carries Phosphoserine. A disulfide bridge links Cys-100 with Cys-110.

The protein belongs to the IL-6 superfamily. As to quaternary structure, component of a hexamer of two molecules each of IL6, IL6R and IL6ST; first binds to IL6R to associate with the signaling subunit IL6ST. Interacts with IL6R (via the N-terminal ectodomain); this interaction may be affected by IL6R-binding with SORL1, hence decreasing IL6 cis signaling. Interacts with SORL1 (via the N-terminal ectodomain); this interaction leads to IL6 internalization and lysosomal degradation. May form a trimeric complex with the soluble SORL1 ectodomain and soluble IL6R receptor; this interaction might stabilize circulating IL6, hence promoting IL6 trans signaling.

Its subcellular location is the secreted. In terms of biological role, cytokine with a wide variety of biological functions in immunity, tissue regeneration, and metabolism. Binds to IL6R, then the complex associates to the signaling subunit IL6ST/gp130 to trigger the intracellular IL6-signaling pathway. The interaction with the membrane-bound IL6R and IL6ST stimulates 'classic signaling', whereas the binding of IL6 and soluble IL6R to IL6ST stimulates 'trans-signaling'. Alternatively, 'cluster signaling' occurs when membrane-bound IL6:IL6R complexes on transmitter cells activate IL6ST receptors on neighboring receiver cells. Functionally, IL6 is a potent inducer of the acute phase response. Rapid production of IL6 contributes to host defense during infection and tissue injury, but excessive IL6 synthesis is involved in disease pathology. In the innate immune response, is synthesized by myeloid cells, such as macrophages and dendritic cells, upon recognition of pathogens through toll-like receptors (TLRs) at the site of infection or tissue injury. In the adaptive immune response, is required for the differentiation of B cells into immunoglobulin-secreting cells. Plays a major role in the differentiation of CD4(+) T cell subsets. Essential factor for the development of T follicular helper (Tfh) cells that are required for the induction of germinal-center formation. Required to drive naive CD4(+) T cells to the Th17 lineage. Also required for proliferation of myeloma cells and the survival of plasmablast cells. Acts as an essential factor in bone homeostasis and on vessels directly or indirectly by induction of VEGF, resulting in increased angiogenesis activity and vascular permeability. Induces, through 'trans-signaling' and synergistically with IL1B and TNF, the production of VEGF. Involved in metabolic controls, is discharged into the bloodstream after muscle contraction increasing lipolysis and improving insulin resistance. 'Trans-signaling' in central nervous system also regulates energy and glucose homeostasis. Mediates, through GLP-1, crosstalk between insulin-sensitive tissues, intestinal L cells and pancreatic islets to adapt to changes in insulin demand. Also acts as a myokine. Plays a protective role during liver injury, being required for maintenance of tissue regeneration. Also has a pivotal role in iron metabolism by regulating HAMP/hepcidin expression upon inflammation or bacterial infection. Through activation of IL6ST-YAP-NOTCH pathway, induces inflammation-induced epithelial regeneration. This chain is Interleukin-6 (IL6), found in Lama glama (Llama).